Reading from the N-terminus, the 456-residue chain is Exodeoxyribonuclease 7 large subunit (456 aa).

This sequence belongs to the XseA family. Heterooligomer composed of large and small subunits.

It is found in the cytoplasm. The enzyme catalyses Exonucleolytic cleavage in either 5'- to 3'- or 3'- to 5'-direction to yield nucleoside 5'-phosphates.. Functionally, bidirectionally degrades single-stranded DNA into large acid-insoluble oligonucleotides, which are then degraded further into small acid-soluble oligonucleotides. In Lactobacillus gasseri (strain ATCC 33323 / DSM 20243 / BCRC 14619 / CIP 102991 / JCM 1131 / KCTC 3163 / NCIMB 11718 / NCTC 13722 / AM63), this protein is Exodeoxyribonuclease 7 large subunit.